The chain runs to 464 residues: Synaptosomal-associated protein 47 (464 aa).

The segment at 20–42 (GRLWDSSGVPQRQKRPGPWRTQT) is disordered. T-SNARE coiled-coil homology domains follow at residues 154–216 (VADA…LTEL) and 401–463 (TSLP…MKRL).

It belongs to the SVAP1 family. As to quaternary structure, forms a complex containing SNAP47, VAMP2 and STX1A. Associates with the BLOC-1 complex. Interacts with BLOC1S6.

Its subcellular location is the endomembrane system. It is found in the cytoplasm. The protein localises to the perinuclear region. Its function is as follows. Plays a role in intracellular membrane fusion. In Homo sapiens (Human), this protein is Synaptosomal-associated protein 47 (SNAP47).